A 321-amino-acid polypeptide reads, in one-letter code: Phospho-N-acetylmuramoyl-pentapeptide-transferase (321 aa).

A run of 10 helical transmembrane segments spans residues 1–21 (MIFIYAIIALLITFILVPILI), 50–70 (MGGLTFLISIIISSIIAIIFV), 76–96 (IILLLFVTIGFGLIGFIDDYI), 112–132 (FLAQIIIAVIFFVLSDVFHLV), 140–160 (IPFVNFDIPLSFAYVIFIVFW), 176–196 (GLATGLSIIGFAMYAVMSYML), 200–220 (AIGIFCIIMIFALLGFLPYNL), 225–245 (VFMGDTGSLALGGIFATISIM), 250–270 (LSLILIGFVFVVETLSVMLQV), and 300–320 (VVTVFWTVGLITGLIGLWIGV).

It belongs to the glycosyltransferase 4 family. MraY subfamily. Mg(2+) serves as cofactor.

Its subcellular location is the cell membrane. It catalyses the reaction UDP-N-acetyl-alpha-D-muramoyl-L-alanyl-gamma-D-glutamyl-L-lysyl-D-alanyl-D-alanine + di-trans,octa-cis-undecaprenyl phosphate = Mur2Ac(oyl-L-Ala-gamma-D-Glu-L-Lys-D-Ala-D-Ala)-di-trans,octa-cis-undecaprenyl diphosphate + UMP. It functions in the pathway cell wall biogenesis; peptidoglycan biosynthesis. In terms of biological role, catalyzes the initial step of the lipid cycle reactions in the biosynthesis of the cell wall peptidoglycan: transfers peptidoglycan precursor phospho-MurNAc-pentapeptide from UDP-MurNAc-pentapeptide onto the lipid carrier undecaprenyl phosphate, yielding undecaprenyl-pyrophosphoryl-MurNAc-pentapeptide, known as lipid I. The chain is Phospho-N-acetylmuramoyl-pentapeptide-transferase from Staphylococcus epidermidis (strain ATCC 12228 / FDA PCI 1200).